A 982-amino-acid chain; its full sequence is Probable DNA-directed RNA polymerase (982 aa).

This sequence belongs to the RNA polymerase beta chain family.

The enzyme catalyses RNA(n) + a ribonucleoside 5'-triphosphate = RNA(n+1) + diphosphate. In terms of biological role, the presence of the two linear plasmids, termed pGKL1 and pGKL2, in strains of Kluyveromyces lactis confers the killer phenotype to the host cell, by promoting the secretion of a toxin able to inhibit the growth of sensitive strains. This Kluyveromyces lactis (strain ATCC 8585 / CBS 2359 / DSM 70799 / NBRC 1267 / NRRL Y-1140 / WM37) (Yeast) protein is Probable DNA-directed RNA polymerase.